A 222-amino-acid polypeptide reads, in one-letter code: UPF0173 metal-dependent hydrolase Mboo_0816 (222 aa).

It belongs to the UPF0173 family.

The chain is UPF0173 metal-dependent hydrolase Mboo_0816 from Methanoregula boonei (strain DSM 21154 / JCM 14090 / 6A8).